We begin with the raw amino-acid sequence, 827 residues long: MQRTSFENQLTFDADFEAILNAIPQPIIVKDEHFRFLFLNDAACMLVGRARCDLIGHTDYDILPTAEADRYRDMDIGVLSTGEEVSVEEPIAVPGGEVRRLVTRKSRAILTRGSSSEKVIVAIALDVTECRTAEAALQASVEHHRSLTELHPQVPWTADPSGEVLEIGPRWEKTGYAPKEALGAGWAKAMHPDDLGEVQREWAKSLATGEPLDVEFRLAAAEGGYSWYRSRAATRRAEDGSILRWYGTVEDIDDRRKMFEALKESEARFRAIADDAPVMIWVTGENGADDYHSRLWLETTGQTAEQAAGKGWLNAVHPDDRNAVERVFYQAFDLREPVRMEYRLKRAGGGSAWVIDIGQPRFASDGTFLGFVGIALDITERRNAEQERLLAQKQIHHMARHDALTGLPNRQFLREEFERLSDHIAPSTRLAILCLDLDGFKAINDAYGRATGDLLLRHVTERLRNFLKQSDILCRLSGDEFVVLRVGINSNAEARLLAQQLIDVIEAPYELAGTHVDLQVVVGLAAASKSDQSLDELIKTADIALERAKTGGGGTIVQYEPKMDADLRARQRMKVSLRHALAKGELEVRYQPLANLRTGQITTFEALARWPHPERGQVSPAEFIAVAEETGLIGPLGEWILRQACTEAVKWPPYVSVAVNLSPLQFRNQRLASTVRNSLEDTGLDASRLQLEITESVLLEECDSNLQTLKEIRQLGVIVAIDDFGTGYSSLSYLRTFPFDKIKVDRSFIADLPKSKESLAIVRAVAAIGRSLGIITTVEGVERQDQLDTIKAEGFDEAQGYLFGGPLPASQAMALLKSRSEISAAER.

Positions 12-82 constitute a PAS 1 domain; it reads FDADFEAILN…DMDIGVLSTG (71 aa). One can recognise a PAC 1 domain in the interval 212 to 264; it reads LDVEFRLAAAEGGYSWYRSRAATRRAEDGSILRWYGTVEDIDDRRKMFEALKE. Positions 265-335 constitute a PAS 2 domain; it reads SEARFRAIAD…RVFYQAFDLR (71 aa). The PAC 2 domain occupies 338 to 390; it reads VRMEYRLKRAGGGSAWVIDIGQPRFASDGTFLGFVGIALDITERRNAEQERLL. The GGDEF domain occupies 428–561; the sequence is TRLAILCLDL…GGGTIVQYEP (134 aa). The EAL domain occupies 570–820; that stretch reads RQRMKVSLRH…QAMALLKSRS (251 aa).

This is an uncharacterized protein from Sinorhizobium fredii (strain NBRC 101917 / NGR234).